Consider the following 159-residue polypeptide: Phosphopantetheine adenylyltransferase (159 aa).

Threonine 10 contributes to the substrate binding site. Residues 10–11 and histidine 18 contribute to the ATP site; that span reads TF. Substrate contacts are provided by lysine 42, leucine 74, and arginine 88. ATP-binding positions include 89–91, glutamate 99, and 124–130; these read GLR and NSFISST.

Belongs to the bacterial CoaD family. As to quaternary structure, homohexamer. Mg(2+) is required as a cofactor.

The protein localises to the cytoplasm. The enzyme catalyses (R)-4'-phosphopantetheine + ATP + H(+) = 3'-dephospho-CoA + diphosphate. Its pathway is cofactor biosynthesis; coenzyme A biosynthesis; CoA from (R)-pantothenate: step 4/5. In terms of biological role, reversibly transfers an adenylyl group from ATP to 4'-phosphopantetheine, yielding dephospho-CoA (dPCoA) and pyrophosphate. The sequence is that of Phosphopantetheine adenylyltransferase from Shewanella pealeana (strain ATCC 700345 / ANG-SQ1).